The primary structure comprises 410 residues: Maintenance of mitochondrial morphology protein 1 (410 aa).

The Lumenal portion of the chain corresponds to 1–19; the sequence is MTPDSCPVRPEPTLSFTQG. The helical transmembrane segment at 20-40 threads the bilayer; that stretch reads LIVGQISVVFLIAAFIKFFIF. Residues 41-410 are Cytoplasmic-facing; sequence GDPPSAEETA…PMPGSLAVDD (370 aa). The segment covering 71-87 has biased composition (polar residues); it reads LRTSNQRPGSQQQQSVL. Residues 71–98 are disordered; sequence LRTSNQRPGSQQQQSVLNRKKSSILRSG. The 217-residue stretch at 119-335 folds into the SMP-LTD domain; it reads QPESLDWFNV…EPRFQEIPLP (217 aa). Positions 380–410 are disordered; sequence ARQAAQRDSLRYRRPRADDAFPMPGSLAVDD. Positions 387-398 are enriched in basic and acidic residues; that stretch reads DSLRYRRPRADD.

The protein belongs to the MMM1 family. Homodimer. Component of the ER-mitochondria encounter structure (ERMES) or MDM complex, composed of MMM1, MDM10, MDM12 and MDM34. An MMM1 homodimer associates with one molecule of MDM12 on each side in a pairwise head-to-tail manner, and the SMP-LTD domains of MMM1 and MDM12 generate a continuous hydrophobic tunnel for phospholipid trafficking.

The protein resides in the endoplasmic reticulum membrane. Component of the ERMES/MDM complex, which serves as a molecular tether to connect the endoplasmic reticulum (ER) and mitochondria. Components of this complex are involved in the control of mitochondrial shape and protein biogenesis, and function in nonvesicular lipid trafficking between the ER and mitochondria. The MDM12-MMM1 subcomplex functions in the major beta-barrel assembly pathway that is responsible for biogenesis of all outer membrane beta-barrel proteins, and acts in a late step after the SAM complex. The MDM10-MDM12-MMM1 subcomplex further acts in the TOM40-specific pathway after the action of the MDM12-MMM1 complex. Essential for establishing and maintaining the structure of mitochondria and maintenance of mtDNA nucleoids. This chain is Maintenance of mitochondrial morphology protein 1, found in Pyricularia oryzae (strain 70-15 / ATCC MYA-4617 / FGSC 8958) (Rice blast fungus).